Reading from the N-terminus, the 224-residue chain is Urease accessory protein UreF (224 aa).

The protein belongs to the UreF family. UreD, UreF and UreG form a complex that acts as a GTP-hydrolysis-dependent molecular chaperone, activating the urease apoprotein by helping to assemble the nickel containing metallocenter of UreC. The UreE protein probably delivers the nickel.

Its subcellular location is the cytoplasm. Its function is as follows. Required for maturation of urease via the functional incorporation of the urease nickel metallocenter. The sequence is that of Urease accessory protein UreF from Ectopseudomonas mendocina (strain ymp) (Pseudomonas mendocina).